Here is a 112-residue protein sequence, read N- to C-terminus: Truncated ankyrin repeat protein B25 (112 aa).

The protein belongs to the orthopoxviruses B25 protein family.

The polypeptide is Truncated ankyrin repeat protein B25 (Bos taurus (Bovine)).